The sequence spans 584 residues: Alpha-glucosidase MAL12 (584 aa).

Asp214 functions as the Nucleophile in the catalytic mechanism. Glu276 serves as the catalytic Proton donor.

Belongs to the glycosyl hydrolase 13 family.

The catalysed reaction is Hydrolysis of terminal, non-reducing (1-&gt;4)-linked alpha-D-glucose residues with release of alpha-D-glucose.. In Saccharomyces cerevisiae (strain ATCC 204508 / S288c) (Baker's yeast), this protein is Alpha-glucosidase MAL12 (MAL12).